The following is a 149-amino-acid chain: Protein K7 (149 aa).

This sequence belongs to the orthopoxvirus OPG044 family. In terms of assembly, interacts with DDX3; this interaction inhibits DDX3 and suppresses DDX3-mediated IFN-beta promoter induction. Interacts with TRAF6 and IRAK2; these interactions suppress TLR-dependent NF-KappaB activation.

The protein resides in the host cytoplasm. In terms of biological role, virulence factor that affects the acute immune response to infection. Bcl-2-like protein which, through its interaction with the DEAD box RNA helicase DDX3X/DDX3, prevents TBK1/IKKepsilon-mediated IRF3 activation. Contributes to virulence by binding to the host TRAF6 and IRAK2 and preventing host NF-kappa-B activation. In Cynomys gunnisoni (Gunnison's prairie dog), this protein is Protein K7 (OPG044).